Here is a 129-residue protein sequence, read N- to C-terminus: Biogenesis of lysosome-related organelles complex 1 subunit CNL1 (129 aa).

This sequence belongs to the BLOC1S4 family. Component of the biogenesis of lysosome-related organelles complex-1 (BLOC-1).

It is found in the cytoplasm. Functionally, component of the biogenesis of lysosome-related organelles complex-1 (BLOC-1), a complex that is involved in endosomal cargo sorting. In Eremothecium gossypii (strain ATCC 10895 / CBS 109.51 / FGSC 9923 / NRRL Y-1056) (Yeast), this protein is Biogenesis of lysosome-related organelles complex 1 subunit CNL1 (CLN1).